Here is a 311-residue protein sequence, read N- to C-terminus: Cytochrome f (311 aa).

A signal peptide spans 1–27 (MRRHLSLVLGSLVIGLALLIAPGASWA). Positions 28, 48, 51, and 52 each coordinate heme. The helical transmembrane segment at 277-297 (IYGLLAFFAAVAIAQIMLVLK) threads the bilayer.

This sequence belongs to the cytochrome f family. In terms of assembly, the 4 large subunits of the cytochrome b6-f complex are cytochrome b6, subunit IV (17 kDa polypeptide, PetD), cytochrome f and the Rieske protein, while the 4 small subunits are PetG, PetL, PetM and PetN. The complex functions as a dimer. Requires heme as cofactor.

Its subcellular location is the cellular thylakoid membrane. Functionally, component of the cytochrome b6-f complex, which mediates electron transfer between photosystem II (PSII) and photosystem I (PSI), cyclic electron flow around PSI, and state transitions. The sequence is that of Cytochrome f from Synechococcus sp. (strain CC9902).